Consider the following 269-residue polypeptide: 4-hydroxy-tetrahydrodipicolinate reductase (269 aa).

NAD(+) contacts are provided by residues glycine 8 to methionine 13 and glutamate 34. Arginine 35 contributes to the NADP(+) binding site. NAD(+) is bound by residues glycine 98–threonine 100 and alanine 122–tyrosine 125. Histidine 155 acts as the Proton donor/acceptor in catalysis. Residue histidine 156 participates in (S)-2,3,4,5-tetrahydrodipicolinate binding. Lysine 159 serves as the catalytic Proton donor. Glycine 165 to threonine 166 is a binding site for (S)-2,3,4,5-tetrahydrodipicolinate.

The protein belongs to the DapB family.

It localises to the cytoplasm. The enzyme catalyses (S)-2,3,4,5-tetrahydrodipicolinate + NAD(+) + H2O = (2S,4S)-4-hydroxy-2,3,4,5-tetrahydrodipicolinate + NADH + H(+). The catalysed reaction is (S)-2,3,4,5-tetrahydrodipicolinate + NADP(+) + H2O = (2S,4S)-4-hydroxy-2,3,4,5-tetrahydrodipicolinate + NADPH + H(+). The protein operates within amino-acid biosynthesis; L-lysine biosynthesis via DAP pathway; (S)-tetrahydrodipicolinate from L-aspartate: step 4/4. Functionally, catalyzes the conversion of 4-hydroxy-tetrahydrodipicolinate (HTPA) to tetrahydrodipicolinate. This chain is 4-hydroxy-tetrahydrodipicolinate reductase, found in Haemophilus ducreyi (strain 35000HP / ATCC 700724).